Here is a 95-residue protein sequence, read N- to C-terminus: Aspartyl/glutamyl-tRNA(Asn/Gln) amidotransferase subunit C (95 aa).

This sequence belongs to the GatC family. In terms of assembly, heterotrimer of A, B and C subunits.

The catalysed reaction is L-glutamyl-tRNA(Gln) + L-glutamine + ATP + H2O = L-glutaminyl-tRNA(Gln) + L-glutamate + ADP + phosphate + H(+). It catalyses the reaction L-aspartyl-tRNA(Asn) + L-glutamine + ATP + H2O = L-asparaginyl-tRNA(Asn) + L-glutamate + ADP + phosphate + 2 H(+). Its function is as follows. Allows the formation of correctly charged Asn-tRNA(Asn) or Gln-tRNA(Gln) through the transamidation of misacylated Asp-tRNA(Asn) or Glu-tRNA(Gln) in organisms which lack either or both of asparaginyl-tRNA or glutaminyl-tRNA synthetases. The reaction takes place in the presence of glutamine and ATP through an activated phospho-Asp-tRNA(Asn) or phospho-Glu-tRNA(Gln). The sequence is that of Aspartyl/glutamyl-tRNA(Asn/Gln) amidotransferase subunit C from Campylobacter lari (strain RM2100 / D67 / ATCC BAA-1060).